The chain runs to 166 residues: UPF0304 protein VP0990 (166 aa).

It belongs to the UPF0304 family.

This Vibrio parahaemolyticus serotype O3:K6 (strain RIMD 2210633) protein is UPF0304 protein VP0990.